The sequence spans 174 residues: Ribosome maturation factor RimP (174 aa).

It belongs to the RimP family.

The protein localises to the cytoplasm. Its function is as follows. Required for maturation of 30S ribosomal subunits. This is Ribosome maturation factor RimP from Acinetobacter baylyi (strain ATCC 33305 / BD413 / ADP1).